A 69-amino-acid polypeptide reads, in one-letter code: Cytochrome c oxidase subunit 8A, mitochondrial (69 aa).

The N-terminal 25 residues, 1–25 (MYVVTPLLLRGLTGSARRLPVPRAQ), are a transit peptide targeting the mitochondrion. The short motif at 2 to 19 (YVVTPLLLRGLTGSARRL) is the SIFI-degron element. At 26 to 36 (VHSMPPEQKLG) the chain is on the mitochondrial matrix side. A helical transmembrane segment spans residues 37 to 60 (VLELAIGFTSCMVTFLLPAGWIMS). The Mitochondrial intermembrane portion of the chain corresponds to 61-69 (HLESYKKRG).

The protein belongs to the cytochrome c oxidase VIII family. Component of the cytochrome c oxidase (complex IV, CIV), a multisubunit enzyme composed of 14 subunits. The complex is composed of a catalytic core of 3 subunits MT-CO1, MT-CO2 and MT-CO3, encoded in the mitochondrial DNA, and 11 supernumerary subunits COX4I, COX5A, COX5B, COX6A, COX6B, COX6C, COX7A, COX7B, COX7C, COX8 and NDUFA4, which are encoded in the nuclear genome. The complex exists as a monomer or a dimer and forms supercomplexes (SCs) in the inner mitochondrial membrane with NADH-ubiquinone oxidoreductase (complex I, CI) and ubiquinol-cytochrome c oxidoreductase (cytochrome b-c1 complex, complex III, CIII), resulting in different assemblies (supercomplex SCI(1)III(2)IV(1) and megacomplex MCI(2)III(2)IV(2)). In terms of processing, in response to mitochondrial stress, the precursor protein is ubiquitinated by the SIFI complex in the cytoplasm before mitochondrial import, leading to its degradation. Within the SIFI complex, UBR4 initiates ubiquitin chain that are further elongated or branched by KCMF1.

The protein resides in the mitochondrion inner membrane. It participates in energy metabolism; oxidative phosphorylation. Functionally, component of the cytochrome c oxidase, the last enzyme in the mitochondrial electron transport chain which drives oxidative phosphorylation. The respiratory chain contains 3 multisubunit complexes succinate dehydrogenase (complex II, CII), ubiquinol-cytochrome c oxidoreductase (cytochrome b-c1 complex, complex III, CIII) and cytochrome c oxidase (complex IV, CIV), that cooperate to transfer electrons derived from NADH and succinate to molecular oxygen, creating an electrochemical gradient over the inner membrane that drives transmembrane transport and the ATP synthase. Cytochrome c oxidase is the component of the respiratory chain that catalyzes the reduction of oxygen to water. Electrons originating from reduced cytochrome c in the intermembrane space (IMS) are transferred via the dinuclear copper A center (CU(A)) of subunit 2 and heme A of subunit 1 to the active site in subunit 1, a binuclear center (BNC) formed by heme A3 and copper B (CU(B)). The BNC reduces molecular oxygen to 2 water molecules using 4 electrons from cytochrome c in the IMS and 4 protons from the mitochondrial matrix. The protein is Cytochrome c oxidase subunit 8A, mitochondrial (COX8A) of Ateles belzebuth (White-bellied spider monkey).